The primary structure comprises 348 residues: Nicotinate-nucleotide--dimethylbenzimidazole phosphoribosyltransferase (348 aa).

Glu-316 functions as the Proton acceptor in the catalytic mechanism.

Belongs to the CobT family.

The enzyme catalyses 5,6-dimethylbenzimidazole + nicotinate beta-D-ribonucleotide = alpha-ribazole 5'-phosphate + nicotinate + H(+). Its pathway is nucleoside biosynthesis; alpha-ribazole biosynthesis; alpha-ribazole from 5,6-dimethylbenzimidazole: step 1/2. Its function is as follows. Catalyzes the synthesis of alpha-ribazole-5'-phosphate from nicotinate mononucleotide (NAMN) and 5,6-dimethylbenzimidazole (DMB). The polypeptide is Nicotinate-nucleotide--dimethylbenzimidazole phosphoribosyltransferase (Xanthomonas oryzae pv. oryzae (strain PXO99A)).